We begin with the raw amino-acid sequence, 234 residues long: UstYa family oxidase phomYd' (234 aa).

The tract at residues 1–26 (MEKFFSPSRHNYADLSPTDVPASEES) is disordered. Residues 47–69 (VLVNRLLAASTVALVMVSLWLGW) traverse the membrane as a helical segment. The HXXHC 1 signature appears at 151–155 (HWDHC). The N-linked (GlcNAc...) asparagine glycan is linked to N208.

Belongs to the ustYa family.

The protein resides in the membrane. It functions in the pathway mycotoxin biosynthesis. In terms of biological role, ustYa family oxidase; part of the gene cluster that mediates the biosynthesis of the phomopsins, a group of hexapeptide mycotoxins which infects lupins and causes lupinosis disease in livestock. Within the pathway, phomYd' catalyzes the desaturation of the Asp moiety into 2,3-dehydroaspartic acid (dAsp). The pathway starts with the processing of the precursor phomA' by several endopeptidases including kexin proteases as well as the cluster-specific S41 family peptidase phomP1 and the oligopeptidase phomG' to produce 10 identical copies of the hexapeptide Tyr-Val-Ile-Pro-Ile-Asp. After being excised from the precursor peptide, the core peptides are cyclized and modified post-translationally by enzymes encoded within the gene cluster. The timing and order of proteolysis of the phomA' precursor and PTMs are still unknown. Two tyrosinase-like enzymes, phomQ1' and phomQ2, catalyze the chlorination and hydroxylation of Tyr, respectively. PhomYb, is proposed to be involved in the construction of the macrocyclic structure. The other 4 ustYa family proteins may be involved in PTMs that generate the unique structure of phomopsin A. PhomYa' is required for the hydroxylation of C-beta of Tyr. PhomYc', phomYd', and phomYe are responsible for the biosynthesis of 2,3-dehydroisoleucine (dIle), 2,3-dehydroaspartic acid (dAsp), and 3,4-dehydroproline (dPro), respectively. While dIle formation by phomYc' is indispensable for the installation of dAsp by phomYd', the order of the other PTMs have not been elucidated yet. Most of the biosynthetic enzymes likely have broad substrate specificity, and thus, there might be a metabolic grid from a precursor to phomopsin A. The enzyme(s) responsible for the biosynthesis of 3,4-dehydrovaline (dVal) have also not been identified yet. Finally, phomM' acts as an S-adenosylmethionine-dependent alpha-N-methyltransferase that catalyzes two successive N-methylation reactions, converting N-desmethyl-phomopsin A to phomopsin A and phomopsin A further to an N,N-dimethylated congener called phomopsin E. The sequence is that of UstYa family oxidase phomYd' from Diaporthe leptostromiformis (Lupinosis disease fungus).